The chain runs to 191 residues: Holliday junction branch migration complex subunit RuvA (191 aa).

The tract at residues 1–64 (MIGRLTGTLA…EDAQLLYGFL (64 aa)) is domain I. A domain II region spans residues 65-138 (TATERATFRQ…KGKLGPDLAL (74 aa)). A flexible linker region spans residues 138–142 (LPGAV). The domain III stretch occupies residues 143–191 (IRNEAQSDIVQALIALGYNEREAAAAIKPLPADVGVSDGIKLALRALGK).

It belongs to the RuvA family. In terms of assembly, homotetramer. Forms an RuvA(8)-RuvB(12)-Holliday junction (HJ) complex. HJ DNA is sandwiched between 2 RuvA tetramers; dsDNA enters through RuvA and exits via RuvB. An RuvB hexamer assembles on each DNA strand where it exits the tetramer. Each RuvB hexamer is contacted by two RuvA subunits (via domain III) on 2 adjacent RuvB subunits; this complex drives branch migration. In the full resolvosome a probable DNA-RuvA(4)-RuvB(12)-RuvC(2) complex forms which resolves the HJ.

The protein localises to the cytoplasm. The RuvA-RuvB-RuvC complex processes Holliday junction (HJ) DNA during genetic recombination and DNA repair, while the RuvA-RuvB complex plays an important role in the rescue of blocked DNA replication forks via replication fork reversal (RFR). RuvA specifically binds to HJ cruciform DNA, conferring on it an open structure. The RuvB hexamer acts as an ATP-dependent pump, pulling dsDNA into and through the RuvAB complex. HJ branch migration allows RuvC to scan DNA until it finds its consensus sequence, where it cleaves and resolves the cruciform DNA. This chain is Holliday junction branch migration complex subunit RuvA, found in Leptothrix cholodnii (strain ATCC 51168 / LMG 8142 / SP-6) (Leptothrix discophora (strain SP-6)).